A 509-amino-acid chain; its full sequence is Maturase K (509 aa).

This sequence belongs to the intron maturase 2 family. MatK subfamily.

The protein localises to the plastid. Its subcellular location is the chloroplast. Its function is as follows. Usually encoded in the trnK tRNA gene intron. Probably assists in splicing its own and other chloroplast group II introns. The protein is Maturase K of Ibicella lutea (Yellow unicorn-plant).